Consider the following 507-residue polypeptide: tRNA (guanine(10)-N(2))-methyltransferase TRMT11 (507 aa).

Basic and acidic residues predominate over residues 459–475 (EKTKKKEQKKKSVENHL). Positions 459-507 (EKTKKKEQKKKSVENHLKSKNNNDVINNNSNDTNSNNNCNNENNIENQK) are disordered. Positions 480–507 (NNDVINNNSNDTNSNNNCNNENNIENQK) are enriched in low complexity.

It belongs to the class I-like SAM-binding methyltransferase superfamily. TRM11 methyltransferase family. As to quaternary structure, part of the heterodimeric TRMT11-TRM112 methyltransferase complex; this complex forms an active tRNA methyltransferase, where TRMT112 acts as an activator of the catalytic subunit TRMT11.

The protein localises to the cytoplasm. It catalyses the reaction guanosine(10) in tRNA + S-adenosyl-L-methionine = N(2)-methylguanosine(10) in tRNA + S-adenosyl-L-homocysteine + H(+). Functionally, catalytic subunit of the TRMT11-TRM112 methyltransferase complex, that specifically mediates the S-adenosyl-L-methionine-dependent N(2)-methylation of guanosine nucleotide at position 10 (m2G10) in tRNAs. This is one of the major tRNA (guanine-N(2))-methyltransferases. The polypeptide is tRNA (guanine(10)-N(2))-methyltransferase TRMT11 (trmt11) (Dictyostelium discoideum (Social amoeba)).